We begin with the raw amino-acid sequence, 655 residues long: MGIFSIANQHIRFAVKLACAIVLALFIGFHFQLETPRWAVLTAAIVAAGPAFAAGGEPYSGAIRYRGMLRIIGTFIGCIAALIIIISMIRAPLLMILVCCVWAGFCTWISSLVRIENSYAWGLSGYTALIIVITIQTEPLLTPQFALERCSEIVIGIGCAILADLLFSPRSIKQEVDRELDSLLVAQYQLMQLCIKHGDSEEVDNAWGDLVRRTAALEGMRSNLNMESSRWVRANRRLKALNTLSLTLITQSCETYLIQNTRPELITDTFRELFETPVETVQDVHRQLKRMRRVIVWTGERETPVTLYSWVGAATRYLLLKRGVISNTKISATEEEILQGEPVVKVESAERHHAMVNFWRTTLSCILGTLFWLWTGWTSGNGAMVMIAVVTSLAMRLPNPRMVCIDFIYGTLAALPLGLLYFLVIIPNTQQSMLLLCLSLAVLGFFIGIEVQKRRLGSMGALASTINIIVLDNPMTFHFSQFLDSALGQIVGCMLAFIVILLVRDKSKDRTGRVLLNQFVSAAVSAMTTNVVRRKENRLPALYQQLFLLMNKFPGDLPKFRLALTMIIAHQRLRDAPIPVNEDLSVFHRQLRRTADHVISAGSDDKRRRYFGQLLDELDIYQEKLRIWEAPPQVTEPVKRLTGMLHKYQNALTDS.

Transmembrane regions (helical) follow at residues phenylalanine 13–leucine 33, tryptophan 38–proline 58, leucine 69–isoleucine 89, leucine 93–valine 113, tryptophan 121–leucine 141, glutamate 152–isoleucine 172, leucine 370–valine 390, phenylalanine 407–proline 427, glutamine 431–valine 451, methionine 459–phenylalanine 479, and phenylalanine 482–leucine 502.

The protein belongs to the aromatic acid exporter ArAE (TC 2.A.85) family.

Its subcellular location is the cell inner membrane. Functionally, forms an efflux pump with AaeA. Could function as a metabolic relief valve, allowing to eliminate certain compounds when they accumulate to high levels in the cell. The polypeptide is p-hydroxybenzoic acid efflux pump subunit AaeB (Salmonella dublin (strain CT_02021853)).